Reading from the N-terminus, the 1464-residue chain is DNA-directed RNA polymerase subunit beta' (1464 aa).

Residues C66, C68, C96, and C99 each contribute to the Zn(2+) site. 3 residues coordinate Mg(2+): D491, D493, and D495. Residues C838, C912, C919, and C922 each contribute to the Zn(2+) site. The segment covering 1143 to 1200 has biased composition (acidic residues); sequence NDDDDDDYYDSDYYDYYDYSDDDDDYDDYDDYYYNYDDDENDNDNDYDYDYDYDYDYD. The disordered stretch occupies residues 1143–1229; sequence NDDDDDDYYD…YDYDYDSDSD (87 aa). The segment covering 1204–1219 has biased composition (low complexity); it reads HNSYSHNSYSPSSNDN. The segment covering 1220 to 1229 has biased composition (acidic residues); that stretch reads YDYDYDSDSD.

This sequence belongs to the RNA polymerase beta' chain family. As to quaternary structure, the RNAP catalytic core consists of 2 alpha, 1 beta, 1 beta' and 1 omega subunit. When a sigma factor is associated with the core the holoenzyme is formed, which can initiate transcription. Mg(2+) is required as a cofactor. The cofactor is Zn(2+).

The enzyme catalyses RNA(n) + a ribonucleoside 5'-triphosphate = RNA(n+1) + diphosphate. In terms of biological role, DNA-dependent RNA polymerase catalyzes the transcription of DNA into RNA using the four ribonucleoside triphosphates as substrates. This chain is DNA-directed RNA polymerase subunit beta', found in Karelsulcia muelleri (strain GWSS) (Sulcia muelleri).